A 211-amino-acid chain; its full sequence is Glycerol-3-phosphate acyltransferase (211 aa).

A run of 5 helical transmembrane segments spans residues 5 to 25 (VILG…TGYL), 55 to 75 (GPGL…ILVA), 85 to 105 (PVPA…AVLA), 126 to 146 (VLLA…LVVL), and 168 to 188 (WFFT…AFVI).

Belongs to the PlsY family. Probably interacts with PlsX.

It is found in the cell inner membrane. It catalyses the reaction an acyl phosphate + sn-glycerol 3-phosphate = a 1-acyl-sn-glycero-3-phosphate + phosphate. The protein operates within lipid metabolism; phospholipid metabolism. Its function is as follows. Catalyzes the transfer of an acyl group from acyl-phosphate (acyl-PO(4)) to glycerol-3-phosphate (G3P) to form lysophosphatidic acid (LPA). This enzyme utilizes acyl-phosphate as fatty acyl donor, but not acyl-CoA or acyl-ACP. The polypeptide is Glycerol-3-phosphate acyltransferase (Thermosynechococcus vestitus (strain NIES-2133 / IAM M-273 / BP-1)).